We begin with the raw amino-acid sequence, 102 residues long: Large ribosomal subunit protein uL24 (102 aa).

This sequence belongs to the universal ribosomal protein uL24 family. Part of the 50S ribosomal subunit.

In terms of biological role, one of two assembly initiator proteins, it binds directly to the 5'-end of the 23S rRNA, where it nucleates assembly of the 50S subunit. Functionally, one of the proteins that surrounds the polypeptide exit tunnel on the outside of the subunit. This is Large ribosomal subunit protein uL24 from Leuconostoc mesenteroides subsp. mesenteroides (strain ATCC 8293 / DSM 20343 / BCRC 11652 / CCM 1803 / JCM 6124 / NCDO 523 / NBRC 100496 / NCIMB 8023 / NCTC 12954 / NRRL B-1118 / 37Y).